The primary structure comprises 380 residues: SAM and SH3 domain-containing protein 3 (380 aa).

Positions 1–174 (MLRRKPSNAS…STAPQYTGPF (174 aa)) are disordered. Residues 22–41 (LQRSSSFKDFAKSKPSSPVV) are compositionally biased toward low complexity. Residues serine 27, serine 34, and serine 42 each carry the phosphoserine modification. Threonine 61 carries the post-translational modification Phosphothreonine. The segment covering 84-93 (MNRKTGKKMV) has biased composition (basic residues). Serine 97 is modified (phosphoserine). A Phosphothreonine modification is found at threonine 103. Serine 110 is modified (phosphoserine). Threonine 112 is modified (phosphothreonine). Residues serine 113 and serine 120 each carry the phosphoserine modification. Residues 143 to 158 (RQASTGSELCSPSPGS) are compositionally biased toward polar residues. Residues 173-234 (PFCGRARVHT…KFIYVDVLPE (62 aa)) form the SH3 domain. The region spanning 252 to 316 (PKPKTLHELL…LTAAELLLDY (65 aa)) is the SAM domain. Threonine 318 is subject to Phosphothreonine. Acidic residues predominate over residues 318-327 (TGSEEAEEGT). Positions 318–380 (TGSEEAEEGT…LHGLSLSGAP (63 aa)) are disordered. Serine 320 is subject to Phosphoserine.

This sequence belongs to the SASH family.

May function as a signaling adapter protein in lymphocytes. The sequence is that of SAM and SH3 domain-containing protein 3 from Bos taurus (Bovine).